The chain runs to 156 residues: 6,7-dimethyl-8-ribityllumazine synthase (156 aa).

5-amino-6-(D-ribitylamino)uracil contacts are provided by residues F28, 62–64, and 86–88; these read ALE and AVI. 91-92 is a binding site for (2S)-2-hydroxy-3-oxobutyl phosphate; it reads ET. H94 functions as the Proton donor in the catalytic mechanism. Residue N119 coordinates 5-amino-6-(D-ribitylamino)uracil. R133 contacts (2S)-2-hydroxy-3-oxobutyl phosphate.

It belongs to the DMRL synthase family.

The enzyme catalyses (2S)-2-hydroxy-3-oxobutyl phosphate + 5-amino-6-(D-ribitylamino)uracil = 6,7-dimethyl-8-(1-D-ribityl)lumazine + phosphate + 2 H2O + H(+). It functions in the pathway cofactor biosynthesis; riboflavin biosynthesis; riboflavin from 2-hydroxy-3-oxobutyl phosphate and 5-amino-6-(D-ribitylamino)uracil: step 1/2. Catalyzes the formation of 6,7-dimethyl-8-ribityllumazine by condensation of 5-amino-6-(D-ribitylamino)uracil with 3,4-dihydroxy-2-butanone 4-phosphate. This is the penultimate step in the biosynthesis of riboflavin. This chain is 6,7-dimethyl-8-ribityllumazine synthase, found in Azoarcus sp. (strain BH72).